The following is a 337-amino-acid chain: Phenylalanine--tRNA ligase alpha subunit (337 aa).

Residue E252 coordinates Mg(2+).

It belongs to the class-II aminoacyl-tRNA synthetase family. Phe-tRNA synthetase alpha subunit type 1 subfamily. In terms of assembly, tetramer of two alpha and two beta subunits. Mg(2+) is required as a cofactor.

The protein resides in the cytoplasm. It carries out the reaction tRNA(Phe) + L-phenylalanine + ATP = L-phenylalanyl-tRNA(Phe) + AMP + diphosphate + H(+). In Francisella tularensis subsp. tularensis (strain SCHU S4 / Schu 4), this protein is Phenylalanine--tRNA ligase alpha subunit.